A 538-amino-acid chain; its full sequence is Mitochondria-eating protein (538 aa).

The tract at residues 1–273 is interaction with YWHAG/14-3-3 protein gamma; the sequence is MAENLKRLVS…PRSRSCSRSR (273 aa). Ser-85 carries the phosphoserine modification. Residues 92–137 are disordered; the sequence is GKPVDSKVPSLQNTFDRERRKDPSPRDRDMQQLDSNLNSTRSQLNQ. Basic and acidic residues predominate over residues 106-122; sequence FDRERRKDPSPRDRDMQ. Coiled coils occupy residues 118-186 and 220-256; these read DRDM…ARHR and QRDTEVTSDYKKQLRNLKEEIAVLSAEKSALQGRSSR. Polar residues predominate over residues 123–137; the sequence is QLDSNLNSTRSQLNQ. Phosphoserine occurs at positions 156 and 159. 2 disordered regions span residues 174–227 and 247–292; these read LKTL…EVTS and KSAL…NRSK. Composition is skewed to basic and acidic residues over residues 181–209 and 216–227; these read EDARHRHTDQRSSENRRSEPRSSEERRCE and RNADQRDTEVTS. The segment covering 253-278 has biased composition (low complexity); sequence RSSRSRSPSPAPRSRSCSRSRSASPS. Residues Ser-285, Ser-287, and Ser-509 each carry the phosphoserine modification.

The protein belongs to the MIEAP family. In terms of assembly, interacts (via coiled-coil domains) with BNIP3L (via BH3 domain). Interacts (via coiled-coil domains) with BNIP3 (via BH3 domain). Interacts with YWHAG/14-3-3 protein gamma; a protein that also plays a role in MALM.

Its subcellular location is the cytoplasm. The protein resides in the cytosol. It is found in the mitochondrion outer membrane. It localises to the mitochondrion matrix. Functionally, key regulator of mitochondrial quality that mediates the repairing or degradation of unhealthy mitochondria in response to mitochondrial damage. Mediator of mitochondrial protein catabolic process (also named MALM) by mediating the degradation of damaged proteins inside mitochondria by promoting the accumulation in the mitochondrial matrix of hydrolases that are characteristic of the lysosomal lumen. Also involved in mitochondrion degradation of damaged mitochondria by promoting the formation of vacuole-like structures (named MIV), which engulf and degrade unhealthy mitochondria by accumulating lysosomes. The physical interaction of SPATA18/MIEAP, BNIP3 and BNIP3L/NIX at the mitochondrial outer membrane regulates the opening of a pore in the mitochondrial double membrane in order to mediate the translocation of lysosomal proteins from the cytoplasm to the mitochondrial matrix. Binds cardiolipin. May form molecular condensates (non-membrane-bounded organelles) within mitochondria that compartmentalize and promote cardiolipin metabolism. The chain is Mitochondria-eating protein (SPATA18) from Macaca fascicularis (Crab-eating macaque).